The chain runs to 371 residues: Neutral protease 2 homolog MGYG_03465 (371 aa).

The signal sequence occupies residues 1-19 (MQFVAVLAALGALVAPAAA). A propeptide spanning residues 20–188 (YPHAPMNETL…SIHARALEKR (169 aa)) is cleaved from the precursor. Intrachain disulfides connect C196/C267 and C274/C292. Zn(2+) is bound at residue H316. E317 is an active-site residue. H320 and D331 together coordinate Zn(2+).

The protein belongs to the peptidase M35 family. Zn(2+) is required as a cofactor.

Its subcellular location is the secreted. The enzyme catalyses Preferential cleavage of bonds with hydrophobic residues in P1'. Also 3-Asn-|-Gln-4 and 8-Gly-|-Ser-9 bonds in insulin B chain.. Functionally, secreted metalloproteinase that allows assimilation of proteinaceous substrates. Shows high activities on basic nuclear substrates such as histone and protamine. May be involved in virulence. The protein is Neutral protease 2 homolog MGYG_03465 of Arthroderma gypseum (strain ATCC MYA-4604 / CBS 118893) (Microsporum gypseum).